Here is a 209-residue protein sequence, read N- to C-terminus: ATP synthase subunit b 2 (209 aa).

The chain crosses the membrane as a helical span at residues Trp9–Phe29.

It belongs to the ATPase B chain family. In terms of assembly, F-type ATPases have 2 components, F(1) - the catalytic core - and F(0) - the membrane proton channel. F(1) has five subunits: alpha(3), beta(3), gamma(1), delta(1), epsilon(1). F(0) has three main subunits: a(1), b(2) and c(10-14). The alpha and beta chains form an alternating ring which encloses part of the gamma chain. F(1) is attached to F(0) by a central stalk formed by the gamma and epsilon chains, while a peripheral stalk is formed by the delta and b chains.

The protein resides in the cell inner membrane. Functionally, f(1)F(0) ATP synthase produces ATP from ADP in the presence of a proton or sodium gradient. F-type ATPases consist of two structural domains, F(1) containing the extramembraneous catalytic core and F(0) containing the membrane proton channel, linked together by a central stalk and a peripheral stalk. During catalysis, ATP synthesis in the catalytic domain of F(1) is coupled via a rotary mechanism of the central stalk subunits to proton translocation. Component of the F(0) channel, it forms part of the peripheral stalk, linking F(1) to F(0). This chain is ATP synthase subunit b 2, found in Desulfosudis oleivorans (strain DSM 6200 / JCM 39069 / Hxd3) (Desulfococcus oleovorans).